Reading from the N-terminus, the 474-residue chain is Bifunctional protein HldE (474 aa).

The ribokinase stretch occupies residues 1–318; the sequence is MKLSMPRFDQ…RAVQREQGSE (318 aa). 194–197 contributes to the ATP binding site; that stretch reads NLSE. Residue Asp263 is part of the active site. Residues 343 to 474 are cytidylyltransferase; sequence FTNGCFDILH…AIVEKIRQKG (132 aa).

It in the N-terminal section; belongs to the carbohydrate kinase PfkB family. This sequence in the C-terminal section; belongs to the cytidylyltransferase family. Homodimer.

It carries out the reaction D-glycero-beta-D-manno-heptose 7-phosphate + ATP = D-glycero-beta-D-manno-heptose 1,7-bisphosphate + ADP + H(+). The catalysed reaction is D-glycero-beta-D-manno-heptose 1-phosphate + ATP + H(+) = ADP-D-glycero-beta-D-manno-heptose + diphosphate. It participates in nucleotide-sugar biosynthesis; ADP-L-glycero-beta-D-manno-heptose biosynthesis; ADP-L-glycero-beta-D-manno-heptose from D-glycero-beta-D-manno-heptose 7-phosphate: step 1/4. The protein operates within nucleotide-sugar biosynthesis; ADP-L-glycero-beta-D-manno-heptose biosynthesis; ADP-L-glycero-beta-D-manno-heptose from D-glycero-beta-D-manno-heptose 7-phosphate: step 3/4. It functions in the pathway bacterial outer membrane biogenesis; LPS core biosynthesis. Functionally, catalyzes the phosphorylation of D-glycero-D-manno-heptose 7-phosphate at the C-1 position to selectively form D-glycero-beta-D-manno-heptose-1,7-bisphosphate. In terms of biological role, catalyzes the ADP transfer from ATP to D-glycero-beta-D-manno-heptose 1-phosphate, yielding ADP-D-glycero-beta-D-manno-heptose. The polypeptide is Bifunctional protein HldE (Pseudomonas aeruginosa (strain ATCC 15692 / DSM 22644 / CIP 104116 / JCM 14847 / LMG 12228 / 1C / PRS 101 / PAO1)).